The sequence spans 354 residues: tRNA N6-adenosine threonylcarbamoyltransferase (354 aa).

Fe cation is bound by residues H111 and H115. Substrate is bound by residues 134-138 (LVSGG), D167, G180, and N279. Fe cation is bound at residue D319.

It belongs to the KAE1 / TsaD family. Fe(2+) is required as a cofactor.

Its subcellular location is the cytoplasm. It carries out the reaction L-threonylcarbamoyladenylate + adenosine(37) in tRNA = N(6)-L-threonylcarbamoyladenosine(37) in tRNA + AMP + H(+). In terms of biological role, required for the formation of a threonylcarbamoyl group on adenosine at position 37 (t(6)A37) in tRNAs that read codons beginning with adenine. Is involved in the transfer of the threonylcarbamoyl moiety of threonylcarbamoyl-AMP (TC-AMP) to the N6 group of A37, together with TsaE and TsaB. TsaD likely plays a direct catalytic role in this reaction. The polypeptide is tRNA N6-adenosine threonylcarbamoyltransferase (Neisseria meningitidis serogroup B (strain ATCC BAA-335 / MC58)).